Reading from the N-terminus, the 189-residue chain is Putative dihydrofolate reductase (189 aa).

In terms of domain architecture, DHFR spans 3 to 185; sequence KMNLIVAMDA…LKFEFCKWKV (183 aa). NADP(+) is bound by residues Ala-9 and 15–21; that span reads GIGKNGV. 29-34 contributes to the substrate binding site; the sequence is DMQYFA. An NADP(+)-binding site is contributed by 53 to 55; that stretch reads RKC. Arg-69 is a binding site for substrate. NADP(+) is bound by residues 75–77 and 115–122; these read SRQ and GGAEIYDL.

The protein belongs to the dihydrofolate reductase family.

It carries out the reaction (6S)-5,6,7,8-tetrahydrofolate + NADP(+) = 7,8-dihydrofolate + NADPH + H(+). The protein operates within cofactor biosynthesis; tetrahydrofolate biosynthesis; 5,6,7,8-tetrahydrofolate from 7,8-dihydrofolate: step 1/1. Its function is as follows. Key enzyme in folate metabolism. Catalyzes an essential reaction for de novo glycine and purine synthesis, and for DNA precursor synthesis. The protein is Putative dihydrofolate reductase (dhfr-1) of Caenorhabditis elegans.